A 618-amino-acid chain; its full sequence is Manganese lipoxygenase (618 aa).

An N-terminal signal peptide occupies residues 1–16 (MRSRILAIVFAARHVA). Positions 36–45 (SSTTVLPSPT) are enriched in low complexity. The segment at 36–58 (SSTTVLPSPTQYTLPNNDPNQGA) is disordered. Positions 46–58 (QYTLPNNDPNQGA) are enriched in polar residues. The Lipoxygenase domain maps to 47–618 (YTLPNNDPNQ…PAVNPFFLSV (572 aa)). N-linked (GlcNAc...) asparagine glycosylation is found at N60, N91, N106, N116, and N157. Residues H290, H294, H478, and N482 each coordinate Mn(2+). An N-linked (GlcNAc...) asparagine glycan is attached at N513. V618 provides a ligand contact to Mn(2+).

Belongs to the lipoxygenase family. Manganese lipoxygenase subfamily. Mn(2+) serves as cofactor. In terms of processing, N- and O-glycosylated.

It localises to the secreted. The enzyme catalyses (9Z,12Z)-octadecadienoate + O2 = (11S)-hydroperoxy-(9Z,12Z)-octadecadienoate. The catalysed reaction is (9Z,12Z)-octadecadienoate + O2 = (13R)-hydroperoxy-(9Z,11E)-octadecadienoate. It catalyses the reaction (9Z,12Z,15Z)-octadecatrienoate + O2 = (11S)-hydroperoxy-(9Z,12Z,15Z)-octadecatrienoate. It carries out the reaction (9Z,12Z,15Z)-octadecatrienoate + O2 = (13R)-hydroperoxy-(9Z,11E,15Z)-octadecatrienoate. In terms of biological role, lipoxygenase that metabolizes linoleic and alpha-linolenic acids to 11S- and 13R-hydroperoxy fatty acids. At the end of lipoxygenation, the intermediate product 11S-HPODE from linoleic acid is then transformed into 13R-HPODE as the final product. It also acts on alpha-linolenic acid producing 11S-HPOTrE and 13R-HPOTrE with subsequent transformation of 11S-HPOTrE to 13R-HPOTrE as final product. In Gaeumannomyces avenae (Oat take-all root rot fungus), this protein is Manganese lipoxygenase.